Reading from the N-terminus, the 141-residue chain is MEPSHKDAETAAAAAAVAAADPRGASSSSGVVVQVREKKGPLRAAIPYMPFPVAVICLFLNTFVPGLGTFVSAFTVLCGARTDLPDRHVCCVFWLNIAAALIQILTAIVMVGWIMSIFWGMDMVILAISQGYKEQGIPQQL.

Ser26 is subject to Phosphoserine. Helical transmembrane passes span 51–71 (FPVA…GTFV) and 87–107 (RHVC…ILTA).

It belongs to the SPEC3 family. Stum subfamily.

The protein resides in the membrane. In Homo sapiens (Human), this protein is Protein stum homolog.